A 126-amino-acid chain; its full sequence is MVLGWLPLLVMVLAPGTTGVKDCVFCELTDSTSCPGTSMRCGDDEDCFTGHGVAPGVGPIINKGCVHATSCGHEEPINYMGVTYSLTTNCCTGHMCNGAPDPTRGRLAGAAASLALGVLLLLQHVL.

Residues 1-19 form the signal peptide; that stretch reads MVLGWLPLLVMVLAPGTTG. Disulfide bonds link Cys-23–Cys-47, Cys-26–Cys-34, Cys-41–Cys-65, Cys-71–Cys-90, and Cys-91–Cys-96. One can recognise a UPAR/Ly6 domain in the interval 23 to 97; that stretch reads CVFCELTDST…TNCCTGHMCN (75 aa). Asn-97 carries the GPI-anchor amidated asparagine lipid modification. Positions 98–126 are cleaved as a propeptide — removed in mature form; the sequence is GAPDPTRGRLAGAAASLALGVLLLLQHVL.

The protein belongs to the SPACA4/bouncer family.

Its subcellular location is the cell membrane. It localises to the cytoplasmic vesicle. The protein resides in the secretory vesicle. The protein localises to the acrosome. It is found in the acrosome inner membrane. Its subcellular location is the acrosome outer membrane. Its function is as follows. Sperm surface membrane protein that is essential for effective sperm-zona pellucida binding and penetration during fertilization. The protein is Sperm acrosome membrane-associated protein 4 (SPACA4) of Bos taurus (Bovine).